The following is a 694-amino-acid chain: Elongation factor G (694 aa).

The tr-type G domain occupies 9-288; that stretch reads DAIRNIGIMA…VIVKWLPSPL (280 aa). GTP contacts are provided by residues 18–25, 82–86, and 136–139; these read AHIDAGKT, DTPGH, and NKMD.

This sequence belongs to the TRAFAC class translation factor GTPase superfamily. Classic translation factor GTPase family. EF-G/EF-2 subfamily.

It is found in the cytoplasm. In terms of biological role, catalyzes the GTP-dependent ribosomal translocation step during translation elongation. During this step, the ribosome changes from the pre-translocational (PRE) to the post-translocational (POST) state as the newly formed A-site-bound peptidyl-tRNA and P-site-bound deacylated tRNA move to the P and E sites, respectively. Catalyzes the coordinated movement of the two tRNA molecules, the mRNA and conformational changes in the ribosome. The protein is Elongation factor G of Chlamydia trachomatis serovar L2b (strain UCH-1/proctitis).